Consider the following 334-residue polypeptide: Cysteine and histidine-rich domain-containing protein 1 (334 aa).

Cysteine 5, cysteine 10, cysteine 24, histidine 27, cysteine 42, cysteine 43, cysteine 59, histidine 64, cysteine 156, cysteine 161, cysteine 175, histidine 178, cysteine 193, cysteine 194, cysteine 210, and histidine 215 together coordinate Zn(2+). 2 consecutive CHORD domains span residues 5 to 64 (CYNR…KGQH) and 156 to 215 (CKNG…KGTH). The CS domain maps to 226 to 315 (VVPCRHDWHQ…AEFMTWARLE (90 aa)).

In terms of biological role, regulates centrosome duplication. The polypeptide is Cysteine and histidine-rich domain-containing protein 1 (chordc1) (Xenopus laevis (African clawed frog)).